A 339-amino-acid chain; its full sequence is Dihydroorotase (339 aa).

Zn(2+) contacts are provided by His-12 and His-14. Substrate is bound by residues 14 to 16 and Asn-40; that span reads HVR. Zn(2+) is bound by residues Lys-94, His-133, His-167, and Asp-239. An N6-carboxylysine modification is found at Lys-94. His-133 provides a ligand contact to substrate. Asp-239 is a catalytic residue. 2 residues coordinate substrate: His-243 and Ala-255.

The protein belongs to the metallo-dependent hydrolases superfamily. DHOase family. Class II DHOase subfamily. In terms of assembly, homodimer. Zn(2+) serves as cofactor.

It catalyses the reaction (S)-dihydroorotate + H2O = N-carbamoyl-L-aspartate + H(+). Its pathway is pyrimidine metabolism; UMP biosynthesis via de novo pathway; (S)-dihydroorotate from bicarbonate: step 3/3. Its function is as follows. Catalyzes the reversible cyclization of carbamoyl aspartate to dihydroorotate. The chain is Dihydroorotase from Helicobacter pylori (strain ATCC 700392 / 26695) (Campylobacter pylori).